Consider the following 154-residue polypeptide: Ribonuclease H (154 aa).

The RNase H type-1 domain maps to 7–148 (KPETVEIYTD…ADALAREGIA (142 aa)). Residues Asp-16, Glu-54, Asp-76, and Asp-140 each contribute to the Mg(2+) site.

Belongs to the RNase H family. Monomer. Mg(2+) is required as a cofactor.

Its subcellular location is the cytoplasm. It catalyses the reaction Endonucleolytic cleavage to 5'-phosphomonoester.. In terms of biological role, endonuclease that specifically degrades the RNA of RNA-DNA hybrids. The sequence is that of Ribonuclease H from Paramagnetospirillum magneticum (strain ATCC 700264 / AMB-1) (Magnetospirillum magneticum).